We begin with the raw amino-acid sequence, 177 residues long: Cytochrome c-type biogenesis protein CcmE (177 aa).

The Cytoplasmic segment spans residues Met-1–Arg-8. Residues Leu-9–Ala-29 traverse the membrane as a helical; Signal-anchor for type II membrane protein segment. The Periplasmic segment spans residues Leu-30–Lys-177. Heme-binding residues include His-131 and Tyr-135. Residues Asn-134 to Lys-177 are disordered. The segment covering Ala-156 to Ala-166 has biased composition (basic and acidic residues). Residues Thr-167–Lys-177 are compositionally biased toward polar residues.

It belongs to the CcmE/CycJ family.

It localises to the cell inner membrane. Functionally, heme chaperone required for the biogenesis of c-type cytochromes. Transiently binds heme delivered by CcmC and transfers the heme to apo-cytochromes in a process facilitated by CcmF and CcmH. This chain is Cytochrome c-type biogenesis protein CcmE, found in Glaesserella parasuis serovar 5 (strain SH0165) (Haemophilus parasuis).